The chain runs to 752 residues: Polyribonucleotide nucleotidyltransferase (752 aa).

2 residues coordinate Mg(2+): D519 and D525. A KH domain is found at 585-644 (PRVIAVKIPVDKIGEVIGPKGKMINQIQEDTGADISIEDDGTVYIGATNGPSADAARSAI). An S1 motif domain is found at 656–728 (GERYLGTVVK…DRGKLSLSPV (73 aa)). The disordered stretch occupies residues 727 to 752 (PVVAEEEGAEGAERAHATEPAEGAEI).

Belongs to the polyribonucleotide nucleotidyltransferase family. It depends on Mg(2+) as a cofactor.

The protein localises to the cytoplasm. It carries out the reaction RNA(n+1) + phosphate = RNA(n) + a ribonucleoside 5'-diphosphate. Its function is as follows. Involved in mRNA degradation. Catalyzes the phosphorolysis of single-stranded polyribonucleotides processively in the 3'- to 5'-direction. This chain is Polyribonucleotide nucleotidyltransferase, found in Pseudarthrobacter chlorophenolicus (strain ATCC 700700 / DSM 12829 / CIP 107037 / JCM 12360 / KCTC 9906 / NCIMB 13794 / A6) (Arthrobacter chlorophenolicus).